A 176-amino-acid chain; its full sequence is uncharacterized protein (176 aa).

This is an uncharacterized protein from Caenorhabditis elegans.